The following is a 708-amino-acid chain: Leukotoxin translocation ATP-binding protein LktB (708 aa).

In terms of domain architecture, Peptidase C39 spans 1-126 (MEVNHQSNDL…SCYQGKIILV (126 aa)). Residues 155-437 (FLETLLVSIF…LAQLWQDFTQ (283 aa)) enclose the ABC transmembrane type-1 domain. The next 5 helical transmembrane spans lie at 159-179 (LLVSIFLQIFALITPLFFQVV), 192-212 (LNIITVALAIVIIFEIVLSGL), 270-290 (ALTSVLDLLFSFIFFAVMWYY), 296-316 (LVILGSLPCYILWSIFISPIL), and 389-409 (VMVINLWLGAHLVISGDLSIG). The ABC transporter domain occupies 469-704 (IAFKNIRFRY…NNGLYSYLHQ (236 aa)). An ATP-binding site is contributed by 503 to 510 (GRSGSGKS).

This sequence belongs to the ABC transporter superfamily. Protein-1 exporter (TC 3.A.1.109) family. As to quaternary structure, homodimer.

The protein localises to the cell inner membrane. It carries out the reaction ATP + H2O + proteinSide 1 = ADP + phosphate + proteinSide 2.. Functionally, part of the ABC transporter complex LktBD involved in leukotoxin export. Transmembrane domains (TMD) form a pore in the inner membrane and the ATP-binding domain (NBD) is responsible for energy generation. This Pasteurella haemolytica-like sp. (strain 5943B) protein is Leukotoxin translocation ATP-binding protein LktB (lktB).